We begin with the raw amino-acid sequence, 150 residues long: Protein Smg homolog (150 aa).

Belongs to the Smg family.

In Methylobacillus flagellatus (strain ATCC 51484 / DSM 6875 / VKM B-1610 / KT), this protein is Protein Smg homolog.